Consider the following 556-residue polypeptide: Melanoma-associated antigen B4 (556 aa).

The span at 1–15 (MPRGQKSKARAREKR) shows a compositional bias: basic residues. The disordered stretch occupies residues 1 to 110 (MPRGQKSKAR…RFSENPQNDL (110 aa)). The span at 39–73 (PSCSNQDSGDAVASTSTAGFPQKSKSQGEAPTTTA) shows a compositional bias: polar residues. The span at 77 to 87 (GACRRSRKSTR) shows a compositional bias: basic residues. One can recognise an MAGE domain in the interval 111–310 (LTRKTGMLMQ…QAFPTHYEEA (200 aa)). A disordered region spans residues 315 to 335 (EERAQAEAVGSPGTSAKDKAE). Ser-325 carries the post-translational modification Phosphoserine. Tandem repeats lie at residues 334-348 (AEAK…CKYQ), 349-363 (AESK…CKDQ), 364-378 (AESK…CKDN), 379-392 (AKSK…RKYK), 393-407 (AKSK…CKDQ), 408-421 (AESK…CKDQ), 422-436 (AESK…CKDQ), 437-451 (AESK…CKDQ), 452-466 (AESK…CKDK), 467-480 (AKSK…HKYK), 481-495 (AKSK…CKDQ), 496-510 (AESK…CKDQ), 511-525 (AESK…CKDN), 526-539 (AKSK…RKYK), and 540-554 (AKSK…GKDK). The segment at 334 to 554 (AEAKVTLVDS…PLVDSSGKDK (221 aa)) is 15 X 15 AA approximate tandem repeats.

In terms of tissue distribution, expressed in testis (at protein level).

It localises to the cytoplasm. This is Melanoma-associated antigen B4 from Mus musculus (Mouse).